The sequence spans 1634 residues: Probable serine/threonine-protein kinase DDB_G0282895 (1634 aa).

One copy of the MORN 1 repeat lies at 40–63 (YKGNLNENKLKNGKGTFLFPNSIY). Residues 84–131 (QKIQKKSSQSKSQQQPPSQTKKSSSPINLSPRLQGQNPTITTNGSNNN) form a disordered region. A compositionally biased stretch (low complexity) spans 89–109 (KSSQSKSQQQPPSQTKKSSSP). A compositionally biased stretch (polar residues) spans 110–119 (INLSPRLQGQ). Over residues 120–131 (NPTITTNGSNNN) the composition is skewed to low complexity. Residues 169 to 191 (YNGKWINGKANGIGCFHFSKDDS) form an MORN 2 repeat. 2 stretches are compositionally biased toward low complexity: residues 273–292 (SNNN…LSPT) and 318–339 (SGSG…PISS). Disordered regions lie at residues 273-367 (SNNN…QQQQ), 658-750 (TTAT…TFSV), and 783-816 (SSIL…NCGQ). The span at 340-351 (GLQHSKTQPNVS) shows a compositional bias: polar residues. 3 stretches are compositionally biased toward low complexity: residues 352–367 (QSQN…QQQQ), 658–688 (TTAT…TTTT), and 703–715 (PPSQ…SPSS). Residues 716-732 (DQTNLPSIAISSSNGIS) show a composition bias toward polar residues. A compositionally biased stretch (low complexity) spans 787 to 813 (NNNNNNNNNNNNNNNNNNNNNNNNNNN). The chain crosses the membrane as a helical span at residues 1255 to 1275 (IFIGFMELCVIDELCGFSFIY). One can recognise a Protein kinase domain in the interval 1377-1634 (LQILQFLGEG…IIQKLCNHKC (258 aa)). ATP-binding positions include 1383–1391 (LGEGALAEV) and lysine 1404. The active-site Proton acceptor is the aspartate 1500.

This sequence belongs to the protein kinase superfamily. TKL Ser/Thr protein kinase family.

The protein resides in the membrane. It catalyses the reaction L-seryl-[protein] + ATP = O-phospho-L-seryl-[protein] + ADP + H(+). It carries out the reaction L-threonyl-[protein] + ATP = O-phospho-L-threonyl-[protein] + ADP + H(+). This is Probable serine/threonine-protein kinase DDB_G0282895 from Dictyostelium discoideum (Social amoeba).